A 312-amino-acid chain; its full sequence is DDRGK domain-containing protein 1 (312 aa).

Over methionine 1–glutamate 2 the chain is Lumenal. A helical transmembrane segment spans residues leucine 3 to leucine 23. Residues glutamine 24–serine 312 lie on the Cytoplasmic side of the membrane. The segment covering asparagine 59 to alanine 79 has biased composition (low complexity). The segment at asparagine 59–glutamate 162 is disordered. Residues leucine 110–glutamate 162 are compositionally biased toward basic and acidic residues.

This sequence belongs to the DDRGK1 family. Interacts with Atg9; the interaction is transient.

The protein resides in the endoplasmic reticulum membrane. Functionally, substrate adapter for ufmylation, the covalent attachment of the ubiquitin-like modifier UFM1 to substrate proteins. Required for ufmylation of Atg9; protects the nervous system during aging, possibly by stabilizing Atg9 and supporting its function. The polypeptide is DDRGK domain-containing protein 1 (Drosophila yakuba (Fruit fly)).